Reading from the N-terminus, the 322-residue chain is 1-aminocyclopropane-1-carboxylate oxidase 1 (322 aa).

Positions 159–259 constitute a Fe2OG dioxygenase domain; that stretch reads PTFGTKVSSY…RMSIASFYNP (101 aa). H183, D185, and H240 together coordinate Fe cation.

The protein belongs to the iron/ascorbate-dependent oxidoreductase family. The cofactor is Fe cation.

The enzyme catalyses 1-aminocyclopropane-1-carboxylate + L-ascorbate + O2 = ethene + L-dehydroascorbate + hydrogen cyanide + CO2 + 2 H2O. The protein operates within alkene biosynthesis; ethylene biosynthesis via S-adenosyl-L-methionine; ethylene from S-adenosyl-L-methionine: step 2/2. The polypeptide is 1-aminocyclopropane-1-carboxylate oxidase 1 (ACO1) (Oryza sativa subsp. japonica (Rice)).